The primary structure comprises 231 residues: Cytochrome c oxidase assembly factor 7 (231 aa).

5 Sel1-like repeats span residues 34–66 (PDGC…DQNE), 68–104 (SESC…NKGG), 108–145 (IDSC…DGNF), 146–182 (AASC…SLGH), and 183–218 (MWGC…DLHR).

It belongs to the hcp beta-lactamase family.

The protein localises to the mitochondrion intermembrane space. In terms of biological role, may be required for assembly of mitochondrial respiratory chain complexes. The polypeptide is Cytochrome c oxidase assembly factor 7 (coa7) (Xenopus tropicalis (Western clawed frog)).